A 413-amino-acid chain; its full sequence is Phosphopentomutase (413 aa).

Residues D11, D306, H311, D347, H348, and H359 each contribute to the Mn(2+) site.

This sequence belongs to the phosphopentomutase family. Mn(2+) serves as cofactor.

The protein resides in the cytoplasm. It catalyses the reaction 2-deoxy-alpha-D-ribose 1-phosphate = 2-deoxy-D-ribose 5-phosphate. It carries out the reaction alpha-D-ribose 1-phosphate = D-ribose 5-phosphate. It participates in carbohydrate degradation; 2-deoxy-D-ribose 1-phosphate degradation; D-glyceraldehyde 3-phosphate and acetaldehyde from 2-deoxy-alpha-D-ribose 1-phosphate: step 1/2. Its function is as follows. Isomerase that catalyzes the conversion of deoxy-ribose 1-phosphate (dRib-1-P) and ribose 1-phosphate (Rib-1-P) to deoxy-ribose 5-phosphate (dRib-5-P) and ribose 5-phosphate (Rib-5-P), respectively. The chain is Phosphopentomutase from Helicobacter pylori (strain G27).